Reading from the N-terminus, the 231-residue chain is Biosynthetic peptidoglycan transglycosylase (231 aa).

The chain crosses the membrane as a helical span at residues 10-30 (LLLLGLIGLFLVWQLWLLGWV).

This sequence belongs to the glycosyltransferase 51 family.

It localises to the cell inner membrane. It catalyses the reaction [GlcNAc-(1-&gt;4)-Mur2Ac(oyl-L-Ala-gamma-D-Glu-L-Lys-D-Ala-D-Ala)](n)-di-trans,octa-cis-undecaprenyl diphosphate + beta-D-GlcNAc-(1-&gt;4)-Mur2Ac(oyl-L-Ala-gamma-D-Glu-L-Lys-D-Ala-D-Ala)-di-trans,octa-cis-undecaprenyl diphosphate = [GlcNAc-(1-&gt;4)-Mur2Ac(oyl-L-Ala-gamma-D-Glu-L-Lys-D-Ala-D-Ala)](n+1)-di-trans,octa-cis-undecaprenyl diphosphate + di-trans,octa-cis-undecaprenyl diphosphate + H(+). Its pathway is cell wall biogenesis; peptidoglycan biosynthesis. Its function is as follows. Peptidoglycan polymerase that catalyzes glycan chain elongation from lipid-linked precursors. In Dechloromonas aromatica (strain RCB), this protein is Biosynthetic peptidoglycan transglycosylase.